The chain runs to 516 residues: Cytochrome P450 1A2 (516 aa).

S69 carries an O-linked (GlcNAc) serine glycan. A substrate-binding site is contributed by F226. Residue C458 participates in heme binding.

Belongs to the cytochrome P450 family. Interacts with PGRMC1; the interaction requires PGRMC1 homodimerization. Heme is required as a cofactor.

The protein resides in the endoplasmic reticulum membrane. It localises to the microsome membrane. The enzyme catalyses an organic molecule + reduced [NADPH--hemoprotein reductase] + O2 = an alcohol + oxidized [NADPH--hemoprotein reductase] + H2O + H(+). It catalyses the reaction 17beta-estradiol + reduced [NADPH--hemoprotein reductase] + O2 = 2-hydroxy-17beta-estradiol + oxidized [NADPH--hemoprotein reductase] + H2O + H(+). The catalysed reaction is 17beta-estradiol + reduced [NADPH--hemoprotein reductase] + O2 = 4-hydroxy-17beta-estradiol + oxidized [NADPH--hemoprotein reductase] + H2O + H(+). It carries out the reaction estrone + reduced [NADPH--hemoprotein reductase] + O2 = 2-hydroxyestrone + oxidized [NADPH--hemoprotein reductase] + H2O + H(+). The enzyme catalyses estrone + reduced [NADPH--hemoprotein reductase] + O2 = 4-hydroxyestrone + oxidized [NADPH--hemoprotein reductase] + H2O + H(+). It catalyses the reaction cholesterol + reduced [NADPH--hemoprotein reductase] + O2 = 25-hydroxycholesterol + oxidized [NADPH--hemoprotein reductase] + H2O + H(+). The catalysed reaction is all-trans-retinol + reduced [NADPH--hemoprotein reductase] + O2 = all-trans-retinal + oxidized [NADPH--hemoprotein reductase] + 2 H2O + H(+). It carries out the reaction all-trans-retinal + reduced [NADPH--hemoprotein reductase] + O2 = all-trans-retinoate + oxidized [NADPH--hemoprotein reductase] + H2O + 2 H(+). The enzyme catalyses (5Z,8Z,11Z,14Z)-eicosatetraenoate + reduced [NADPH--hemoprotein reductase] + O2 = (14R,15S)-epoxy-(5Z,8Z,11Z)-eicosatrienoate + oxidized [NADPH--hemoprotein reductase] + H2O + H(+). It catalyses the reaction (5Z,8Z,11Z,14Z)-eicosatetraenoate + reduced [NADPH--hemoprotein reductase] + O2 = (14S,15R)-epoxy-(5Z,8Z,11Z)-eicosatrienoate + oxidized [NADPH--hemoprotein reductase] + H2O + H(+). The catalysed reaction is (5Z,8Z,11Z,14Z,17Z)-eicosapentaenoate + reduced [NADPH--hemoprotein reductase] + O2 = (17R,18S)-epoxy-(5Z,8Z,11Z,14Z)-eicosatetraenoate + oxidized [NADPH--hemoprotein reductase] + H2O + H(+). It carries out the reaction (4Z,7Z,10Z,13Z,16Z,19Z)-docosahexaenoate + reduced [NADPH--hemoprotein reductase] + O2 = (19R,20S)-epoxy-(4Z,7Z,10Z,13Z,16Z)-docosapentaenoate + oxidized [NADPH--hemoprotein reductase] + H2O + H(+). The enzyme catalyses (5S)-hydroperoxy-(6E,8Z,11Z,14Z)-eicosatetraenoate = 5-oxo-(6E,8Z,11Z,14Z)-eicosatetraenoate + H2O. It catalyses the reaction (12S)-hydroperoxy-(5Z,8Z,10E,14Z)-eicosatetraenoate = 12-oxo-(5Z,8Z,10E,14Z)-eicosatetraenoate + H2O. The catalysed reaction is (15S)-hydroperoxy-(5Z,8Z,11Z,13E)-eicosatetraenoate = 15-oxo-(5Z,8Z,11Z,13E)-eicosatetraenoate + H2O. It carries out the reaction (13S)-hydroperoxy-(9Z,11E)-octadecadienoate = 13-oxo-(9Z,11E)-octadecadienoate + H2O. The enzyme catalyses (5Z,8Z,11Z,14Z)-eicosatetraenoate + reduced [NADPH--hemoprotein reductase] + O2 = 13-hydroxy-(5Z,8Z,11Z,14Z)-eicosatetraenoate + oxidized [NADPH--hemoprotein reductase] + H2O + H(+). It catalyses the reaction (5Z,8Z,11Z,14Z)-eicosatetraenoate + reduced [NADPH--hemoprotein reductase] + O2 = 19-hydroxy-(5Z,8Z,11Z,14Z)-eicosatetraenoate + oxidized [NADPH--hemoprotein reductase] + H2O + H(+). The catalysed reaction is (9Z,12Z)-octadecadienoate + reduced [NADPH--hemoprotein reductase] + O2 = 11-hydroxy-(9Z,12Z)-octadecadienoate + oxidized [NADPH--hemoprotein reductase] + H2O + H(+). The protein operates within cofactor metabolism; retinol metabolism. Its pathway is steroid metabolism; cholesterol metabolism. It functions in the pathway lipid metabolism; arachidonate metabolism. Its function is as follows. A cytochrome P450 monooxygenase involved in the metabolism of various endogenous substrates, including fatty acids, steroid hormones and vitamins. Mechanistically, uses molecular oxygen inserting one oxygen atom into a substrate, and reducing the second into a water molecule, with two electrons provided by NADPH via cytochrome P450 reductase (NADPH--hemoprotein reductase). Catalyzes the hydroxylation of carbon-hydrogen bonds. Exhibits high catalytic activity for the formation of hydroxyestrogens from estrone (E1) and 17beta-estradiol (E2), namely 2-hydroxy E1 and E2. Metabolizes cholesterol toward 25-hydroxycholesterol, a physiological regulator of cellular cholesterol homeostasis. May act as a major enzyme for all-trans retinoic acid biosynthesis in the liver. Catalyzes two successive oxidative transformation of all-trans retinol to all-trans retinal and then to the active form all-trans retinoic acid. Primarily catalyzes stereoselective epoxidation of the last double bond of polyunsaturated fatty acids (PUFA), displaying a strong preference for the (R,S) stereoisomer. Catalyzes bisallylic hydroxylation and omega-1 hydroxylation of PUFA. May also participate in eicosanoids metabolism by converting hydroperoxide species into oxo metabolites (lipoxygenase-like reaction, NADPH-independent). Plays a role in the oxidative metabolism of xenobiotics. Catalyzes the N-hydroxylation of heterocyclic amines and the O-deethylation of phenacetin. Metabolizes caffeine via N3-demethylation. In Macaca fuscata fuscata (Japanese macaque), this protein is Cytochrome P450 1A2 (CYP1A2).